The following is a 144-amino-acid chain: Large ribosomal subunit protein uL11 (144 aa).

This sequence belongs to the universal ribosomal protein uL11 family. In terms of assembly, part of the ribosomal stalk of the 50S ribosomal subunit. Interacts with L10 and the large rRNA to form the base of the stalk. L10 forms an elongated spine to which L12 dimers bind in a sequential fashion forming a multimeric L10(L12)X complex. One or more lysine residues are methylated.

In terms of biological role, forms part of the ribosomal stalk which helps the ribosome interact with GTP-bound translation factors. This is Large ribosomal subunit protein uL11 from Streptomyces griseus subsp. griseus (strain JCM 4626 / CBS 651.72 / NBRC 13350 / KCC S-0626 / ISP 5235).